The following is a 93-amino-acid chain: Acylphosphatase (93 aa).

Residues 5 to 93 enclose the Acylphosphatase-like domain; that stretch reads CIIAWVHGRV…EELTGFRIRY (89 aa). Active-site residues include Arg20 and Asn38.

The protein belongs to the acylphosphatase family.

The catalysed reaction is an acyl phosphate + H2O = a carboxylate + phosphate + H(+). This Citrobacter koseri (strain ATCC BAA-895 / CDC 4225-83 / SGSC4696) protein is Acylphosphatase (acyP).